We begin with the raw amino-acid sequence, 411 residues long: Flavohemoprotein (411 aa).

In terms of domain architecture, Globin spans 5-142 (TLSQETKQIV…IADVFIQVEK (138 aa)). H89 is a binding site for heme b. Active-site charge relay system residues include Y99 and E141. Residues 153 to 411 (GGWREFRSFV…FGPAGTLASS (259 aa)) are reductase. In terms of domain architecture, FAD-binding FR-type spans 156–267 (REFRSFVVEK…TAPAGDFTLQ (112 aa)). FAD contacts are provided by residues Y194 and 210–213 (RQYS). 280-285 (GVGITP) serves as a coordination point for NADP(+). Residue 401–404 (FFGP) participates in FAD binding.

This sequence belongs to the globin family. Two-domain flavohemoproteins subfamily. The protein in the C-terminal section; belongs to the flavoprotein pyridine nucleotide cytochrome reductase family. Heme b is required as a cofactor. It depends on FAD as a cofactor.

The enzyme catalyses 2 nitric oxide + NADPH + 2 O2 = 2 nitrate + NADP(+) + H(+). It carries out the reaction 2 nitric oxide + NADH + 2 O2 = 2 nitrate + NAD(+) + H(+). Functionally, is involved in NO detoxification in an aerobic process, termed nitric oxide dioxygenase (NOD) reaction that utilizes O(2) and NAD(P)H to convert NO to nitrate, which protects the bacterium from various noxious nitrogen compounds. Therefore, plays a central role in the inducible response to nitrosative stress. The polypeptide is Flavohemoprotein (Halalkalibacterium halodurans (strain ATCC BAA-125 / DSM 18197 / FERM 7344 / JCM 9153 / C-125) (Bacillus halodurans)).